A 773-amino-acid chain; its full sequence is FT-interacting protein 3 (773 aa).

Residues 1-16 (MQRPPPEDFSLKETRP) are compositionally biased toward basic and acidic residues. Residues 1 to 24 (MQRPPPEDFSLKETRPHLGGGKLS) are disordered. C2 domains follow at residues 22 to 142 (KLSG…PQWY), 181 to 305 (VSGT…SRWY), and 345 to 471 (YSSD…THSY). Ca(2+) contacts are provided by D55, D61, D108, D110, and D115. The next 3 membrane-spanning stretches (helical) occupy residues 574–594 (IMGVLSGLIAVGKWFEQICNW), 608–628 (IILVLYPELILPTIFLYLFLI), and 716–736 (LFVLFCLIAAVILYVTPFQVV).

This sequence belongs to the MCTP family. Interacts with and regulates subcellular localization and trafficking of STM. Ca(2+) serves as cofactor. Accumulates in vascular tissues, leaf primordia and flowers. Highly expressed in roots meristems and in both vegetative and inflorescence shoot apical meristems (SAMs).

It is found in the endoplasmic reticulum membrane. The protein localises to the cytoplasm. The protein resides in the vesicle. Its subcellular location is the cell membrane. It localises to the endosome membrane. It is found in the golgi apparatus membrane. Required for proliferation and differentiation of shoot stem cells in the shoot apical meristem (SAM), thus determining the appropriate balance between the maintenance of shoot stem cells and their differentiation into other aboveground plant parts via the control of subcellular localization and intercellular trafficking of STM in the shoot apex. Prevents intracellular trafficking of STM to the plasma membrane in cells in the peripheral shoot meristem region thus facilitating STM recycling to the nucleus to maintain stem cells. May function as a signaling molecule by regulating the trafficking of other regulators. The protein is FT-interacting protein 3 of Arabidopsis thaliana (Mouse-ear cress).